We begin with the raw amino-acid sequence, 432 residues long: Trigger factor (432 aa).

The PPIase FKBP-type domain maps to 161-246 (DDRVTIDFVG…LKKVENMVLP (86 aa)).

It belongs to the FKBP-type PPIase family. Tig subfamily.

Its subcellular location is the cytoplasm. It carries out the reaction [protein]-peptidylproline (omega=180) = [protein]-peptidylproline (omega=0). Involved in protein export. Acts as a chaperone by maintaining the newly synthesized protein in an open conformation. Functions as a peptidyl-prolyl cis-trans isomerase. This is Trigger factor from Haemophilus influenzae (strain PittGG).